The chain runs to 212 residues: MTDIAIVDYGMGNLRSVAKALEHVAPEAVIAVTNNPEVVRKAERVVVPGQGAMPDCLRELDRLGLREAVRDAAANKPFLGICIGLQMLFDSSEEGNVSGLGIVPGRVKRFPASAMKDEKGQKLKVPHMGWNQVHQSVGHSLWKNIANDSRFYFVHSYYVEPADADSAGHSAYPFSFTCAVAKDNIFAVQFHPEKSHAAGLTLLGNFVRWKPV.

Residues 3 to 212 form the Glutamine amidotransferase type-1 domain; it reads DIAIVDYGMG…LGNFVRWKPV (210 aa). The Nucleophile role is filled by C82. Active-site residues include H191 and E193.

As to quaternary structure, heterodimer of HisH and HisF.

The protein resides in the cytoplasm. It carries out the reaction 5-[(5-phospho-1-deoxy-D-ribulos-1-ylimino)methylamino]-1-(5-phospho-beta-D-ribosyl)imidazole-4-carboxamide + L-glutamine = D-erythro-1-(imidazol-4-yl)glycerol 3-phosphate + 5-amino-1-(5-phospho-beta-D-ribosyl)imidazole-4-carboxamide + L-glutamate + H(+). It catalyses the reaction L-glutamine + H2O = L-glutamate + NH4(+). Its pathway is amino-acid biosynthesis; L-histidine biosynthesis; L-histidine from 5-phospho-alpha-D-ribose 1-diphosphate: step 5/9. Its function is as follows. IGPS catalyzes the conversion of PRFAR and glutamine to IGP, AICAR and glutamate. The HisH subunit catalyzes the hydrolysis of glutamine to glutamate and ammonia as part of the synthesis of IGP and AICAR. The resulting ammonia molecule is channeled to the active site of HisF. This chain is Imidazole glycerol phosphate synthase subunit HisH, found in Nitrosospira multiformis (strain ATCC 25196 / NCIMB 11849 / C 71).